Consider the following 257-residue polypeptide: Snake venom serine protease salmonase (257 aa).

An N-terminal signal peptide occupies residues M1–A18. Positions Q19 to L24 are excised as a propeptide. In terms of domain architecture, Peptidase S1 spans V25–A248. Intrachain disulfides connect C31-C162, C49-C65, C141-C209, C173-C188, and C199-C224. Residue H64 is the Charge relay system of the active site. The N-linked (GlcNAc...) asparagine glycan is linked to N78. The active-site Charge relay system is the D109. The active-site Charge relay system is the S203.

Belongs to the peptidase S1 family. Snake venom subfamily. As to quaternary structure, monomer. Expressed by the venom gland.

The protein localises to the secreted. In terms of biological role, snake venom serine protease that may act in the hemostasis system of the prey. This Gloydius brevicauda (Korean slamosa snake) protein is Snake venom serine protease salmonase.